The chain runs to 657 residues: ER degradation-enhancing alpha-mannosidase-like protein 1 (657 aa).

Residues 1–4 (MQWR) are Cytoplasmic-facing. Residues 5–25 (ALVLGLVLLRLGLHGVLWLVF) traverse the membrane as a helical; Signal-anchor for type II membrane protein segment. Residues 26-657 (GLGPSMGFYQ…RQIDQMVGLI (632 aa)) are Lumenal-facing. The interval 48–94 (SPDGPASPTSGPVGRPGGVSGPSWLQPPGTGAAQSPRKAPRRPGPGM) is disordered. N-linked (GlcNAc...) asparagine glycosylation is found at asparagine 181, asparagine 198, asparagine 299, asparagine 342, and asparagine 624.

The protein belongs to the glycosyl hydrolase 47 family. Interacts with DNAJC10. Interacts with DERL2 and DERL3. Binds to SEL1L.

The protein resides in the endoplasmic reticulum membrane. Functionally, extracts misfolded glycoproteins, but not glycoproteins undergoing productive folding, from the calnexin cycle. It is directly involved in endoplasmic reticulum-associated degradation (ERAD) and targets misfolded glycoproteins for degradation in an N-glycan-independent manner, probably by forming a complex with SEL1L. It has low mannosidase activity, catalyzing mannose trimming from Man8GlcNAc2 to Man7GlcNAc2. This is ER degradation-enhancing alpha-mannosidase-like protein 1 (EDEM1) from Homo sapiens (Human).